Reading from the N-terminus, the 530-residue chain is Calcium-dependent protein kinase 14 (530 aa).

A lipid anchor (N-myristoyl glycine) is attached at Gly2. Residues 54-312 enclose the Protein kinase domain; the sequence is YKLGRELGRG…AQQVLDHPWI (259 aa). ATP-binding positions include 60–68 and Lys83; that span reads LGRGEFGVT. Asp178 serves as the catalytic Proton acceptor. The residue at position 218 (Ser218) is a Phosphoserine. An autoinhibitory domain region spans residues 318 to 348; it reads ASNVSLGETVRARLKQFSVMNKLKKRALRVI. EF-hand domains are found at residues 355 to 390, 391 to 426, 427 to 462, and 463 to 498; these read EETS…LGIV, VPQD…IRKL, GNDE…DVDT, and TSEE…GTDW. Asp368, Ser370, Lys374, Glu379, Asp404, Asp406, Asp408, Tyr410, Glu415, Asp440, Asn442, Ser444, Tyr446, Glu451, Asp476, Asn478, Asp480, and Lys482 together coordinate Ca(2+). The residue at position 484 (Ser484) is a Phosphoserine. Glu487 contributes to the Ca(2+) binding site.

The protein belongs to the protein kinase superfamily. Ser/Thr protein kinase family. CDPK subfamily.

It localises to the membrane. The catalysed reaction is L-seryl-[protein] + ATP = O-phospho-L-seryl-[protein] + ADP + H(+). It carries out the reaction L-threonyl-[protein] + ATP = O-phospho-L-threonyl-[protein] + ADP + H(+). With respect to regulation, activated by calcium. Autophosphorylation may play an important role in the regulation of the kinase activity. In terms of biological role, may play a role in signal transduction pathways that involve calcium as a second messenger. This is Calcium-dependent protein kinase 14 (CPK14) from Arabidopsis thaliana (Mouse-ear cress).